Reading from the N-terminus, the 200-residue chain is MSFSPLIRQLIDAFRVLPGVGQKTAQRMALQLLERDRSGGSRLALALGQAMDGVGHCRLCRTLTEEELCPQCSDLRRNDTLLCVVEGPTDVYAVEQTGYRGRYFVLKGHLSPLDGLGPEAIGIPQLMERISQQATFTEVILATNPTVEGEATAHYIAQLLHDKGLVASRIAHGVPLGGELDLVDGGTLAHSFAGRKPIAL.

A C4-type zinc finger spans residues cysteine 57–cysteine 72. One can recognise a Toprim domain in the interval threonine 80–proline 175.

It belongs to the RecR family.

Functionally, may play a role in DNA repair. It seems to be involved in an RecBC-independent recombinational process of DNA repair. It may act with RecF and RecO. The chain is Recombination protein RecR from Pseudomonas syringae pv. tomato (strain ATCC BAA-871 / DC3000).